Consider the following 303-residue polypeptide: Hemolysin E (303 aa).

Cysteines 87 and 285 form a disulfide. A helical transmembrane segment spans residues alanine 179–alanine 199.

It belongs to the hemolysin E family. As to quaternary structure, monomer and oligomer. In periplasm, it is present as a monomer, while in outer membrane vesicles, it oligomerizes to form a pore structure that is active. The pore is formed by a dodecamer. Post-translationally, in periplasm, it forms a disulfide bond, which prevents the oligomerization. In outer membrane vesicles, the redox status prevents formation of the disulfide bond, leading to oligomerization and pore formation.

The protein resides in the secreted. The protein localises to the periplasm. It localises to the host cell membrane. Functionally, toxin, which has some hemolytic activity towards mammalian cells. Acts by forming a pore-like structure upon contact with mammalian cells. This is Hemolysin E (hlyE) from Salmonella paratyphi A (strain ATCC 9150 / SARB42).